The sequence spans 476 residues: UDP-N-acetylmuramate--L-alanine ligase (476 aa).

121 to 127 (GAHGKTT) serves as a coordination point for ATP.

This sequence belongs to the MurCDEF family.

It is found in the cytoplasm. It catalyses the reaction UDP-N-acetyl-alpha-D-muramate + L-alanine + ATP = UDP-N-acetyl-alpha-D-muramoyl-L-alanine + ADP + phosphate + H(+). Its pathway is cell wall biogenesis; peptidoglycan biosynthesis. In terms of biological role, cell wall formation. The sequence is that of UDP-N-acetylmuramate--L-alanine ligase from Clavibacter sepedonicus (Clavibacter michiganensis subsp. sepedonicus).